The sequence spans 360 residues: Phospho-N-acetylmuramoyl-pentapeptide-transferase (360 aa).

10 helical membrane passes run 21 to 41 (YITF…LWIG), 73 to 93 (TMGG…WADL), 98 to 118 (VWFV…DDYW), 132 to 152 (WKYF…YAVG), 168 to 188 (FMPQ…VGTS), 199 to 219 (GLAI…AWAT), 236 to 256 (AGEL…FLWY), 263 to 283 (VFMG…IAVL), 288 to 308 (LLLV…ILQV), and 338 to 358 (VIVC…VTLK).

This sequence belongs to the glycosyltransferase 4 family. MraY subfamily. The cofactor is Mg(2+).

Its subcellular location is the cell inner membrane. It catalyses the reaction UDP-N-acetyl-alpha-D-muramoyl-L-alanyl-gamma-D-glutamyl-meso-2,6-diaminopimeloyl-D-alanyl-D-alanine + di-trans,octa-cis-undecaprenyl phosphate = di-trans,octa-cis-undecaprenyl diphospho-N-acetyl-alpha-D-muramoyl-L-alanyl-D-glutamyl-meso-2,6-diaminopimeloyl-D-alanyl-D-alanine + UMP. It participates in cell wall biogenesis; peptidoglycan biosynthesis. Its function is as follows. Catalyzes the initial step of the lipid cycle reactions in the biosynthesis of the cell wall peptidoglycan: transfers peptidoglycan precursor phospho-MurNAc-pentapeptide from UDP-MurNAc-pentapeptide onto the lipid carrier undecaprenyl phosphate, yielding undecaprenyl-pyrophosphoryl-MurNAc-pentapeptide, known as lipid I. This chain is Phospho-N-acetylmuramoyl-pentapeptide-transferase, found in Actinobacillus pleuropneumoniae serotype 7 (strain AP76).